A 149-amino-acid polypeptide reads, in one-letter code: D-aminoacyl-tRNA deacylase (149 aa).

The Gly-cisPro motif, important for rejection of L-amino acids signature appears at 137-138 (GP).

The protein belongs to the DTD family. In terms of assembly, homodimer.

It is found in the cytoplasm. The catalysed reaction is glycyl-tRNA(Ala) + H2O = tRNA(Ala) + glycine + H(+). It carries out the reaction a D-aminoacyl-tRNA + H2O = a tRNA + a D-alpha-amino acid + H(+). In terms of biological role, an aminoacyl-tRNA editing enzyme that deacylates mischarged D-aminoacyl-tRNAs. Also deacylates mischarged glycyl-tRNA(Ala), protecting cells against glycine mischarging by AlaRS. Acts via tRNA-based rather than protein-based catalysis; rejects L-amino acids rather than detecting D-amino acids in the active site. By recycling D-aminoacyl-tRNA to D-amino acids and free tRNA molecules, this enzyme counteracts the toxicity associated with the formation of D-aminoacyl-tRNA entities in vivo and helps enforce protein L-homochirality. The protein is D-aminoacyl-tRNA deacylase of Anaeromyxobacter dehalogenans (strain 2CP-C).